The chain runs to 341 residues: Abnormal cell lineage protein 44 (341 aa).

Positions 1 to 21 are cleaved as a signal peptide; sequence MRALYFRTTTLSTFFILCSLA. 11 disulfides stabilise this stretch: Cys-84-Cys-95, Cys-134-Cys-142, Cys-144-Cys-158, Cys-206-Cys-220, Cys-208-Cys-215, Cys-265-Cys-292, Cys-275-Cys-287, Cys-291-Cys-331, Cys-307-Cys-322, Cys-309-Cys-319, and Cys-314-Cys-315. Residue Ser-212 is the site of O-palmitoleoyl serine; by mom-1 attachment. Asn-279 is a glycosylation site (N-linked (GlcNAc...) asparagine).

It belongs to the Wnt family. In terms of processing, palmitoleoylation is required for efficient binding to frizzled receptors. Depalmitoleoylation leads to Wnt signaling pathway inhibition.

The protein localises to the secreted. It is found in the extracellular space. The protein resides in the extracellular matrix. In terms of biological role, ligand for members of the frizzled family of seven transmembrane receptors. Affects male tail development, vulval precursor cell specification and egg laying. Involved in morphogenesis by influencing polarity of asymmetric cell divisions of the B, U, and F cells in the male, and the T cell in males and hermaphrodites. Controls spindle orientation in B-gamma cell division during male copulatory spicule development. Involved in specification of the P7.p lineage during vulval development. Has a role in providing polarity and default lin-17 localization in axon development and positioning of neuromuscular synapses in DA9 regions by negatively regulating synaptogenesis. This chain is Abnormal cell lineage protein 44, found in Caenorhabditis briggsae.